The chain runs to 418 residues: Metacaspase-2 (418 aa).

Residues 68 to 113 (PSPYTHAPHAPSPFNHAPPDSYPFTHAPPASSPFNHAPPGPPPPVH) form a disordered region. Residues 70 to 80 (PYTHAPHAPSP) are compositionally biased toward low complexity. The span at 103 to 112 (HAPPGPPPPV) shows a compositional bias: pro residues. Active-site residues include His-200 and Cys-256. The tract at residues 385-406 (PDEEEEVNQAPQKTQEPQLSAN) is disordered. Polar residues predominate over residues 393–405 (QAPQKTQEPQLSA).

It belongs to the peptidase C14B family.

Acts as a negative regulator of oxidative stress cell death and hypersensitive cell death response mediated by immune response. Acts via indirect or direct regulation of AMC1 at postranscriptional level. The protein is Metacaspase-2 (AMC2) of Arabidopsis thaliana (Mouse-ear cress).